Reading from the N-terminus, the 487-residue chain is Wax ester synthase/diacylglycerol acyltransferase 3 (487 aa).

Residues Met-1 to Trp-193 lie on the Cytoplasmic side of the membrane. His-151 serves as the catalytic Proton acceptor. A helical transmembrane segment spans residues Trp-194 to Phe-214. Over Lys-215–Val-487 the chain is Lumenal.

This sequence in the N-terminal section; belongs to the long-chain O-acyltransferase family. Mostly expressed in flowers and siliques.

The protein resides in the cell membrane. It localises to the endoplasmic reticulum membrane. It carries out the reaction an acyl-CoA + a 1,2-diacyl-sn-glycerol = a triacyl-sn-glycerol + CoA. It catalyses the reaction a long chain fatty alcohol + a fatty acyl-CoA = a wax ester + CoA. It participates in glycerolipid metabolism; triacylglycerol biosynthesis. Its pathway is lipid metabolism. Its function is as follows. Bifunctional wax ester synthase/diacylglycerol acyltransferase. Involved in cuticular wax biosynthesis. The polypeptide is Wax ester synthase/diacylglycerol acyltransferase 3 (Arabidopsis thaliana (Mouse-ear cress)).